A 901-amino-acid chain; its full sequence is Protein translocase subunit SecA (901 aa).

ATP is bound by residues Q87, 105-109 (GEGKT), and D512. A disordered region spans residues 853–901 (QMQQLSHQTDENEAAEAIAAQTGDRKVGRNDPCPCGSGKKYKSCHGRLS). Zn(2+)-binding residues include C885, C887, C896, and H897. The segment covering 891–901 (KKYKSCHGRLS) has biased composition (basic residues).

Belongs to the SecA family. In terms of assembly, monomer and homodimer. Part of the essential Sec protein translocation apparatus which comprises SecA, SecYEG and auxiliary proteins SecDF-YajC and YidC. The cofactor is Zn(2+).

The protein resides in the cell inner membrane. It localises to the cytoplasm. It carries out the reaction ATP + H2O + cellular proteinSide 1 = ADP + phosphate + cellular proteinSide 2.. Functionally, part of the Sec protein translocase complex. Interacts with the SecYEG preprotein conducting channel. Has a central role in coupling the hydrolysis of ATP to the transfer of proteins into and across the cell membrane, serving both as a receptor for the preprotein-SecB complex and as an ATP-driven molecular motor driving the stepwise translocation of polypeptide chains across the membrane. The sequence is that of Protein translocase subunit SecA from Enterobacter sp. (strain 638).